The primary structure comprises 638 residues: Probable ATP-binding protein YheS (638 aa).

2 ABC transporter domains span residues 2–246 (IIFS…AQQT) and 313–531 (VMIE…STSE). Residues 34 to 41 (GKNGCGKS) and 349 to 356 (GKNGAGKS) contribute to the ATP site. The interval 525–563 (EQNSTSENKVSEKVGDNENSVQNRKEQKRREAELRQQTA) is disordered. The span at 547–558 (NRKEQKRREAEL) shows a compositional bias: basic and acidic residues.

It belongs to the ABC transporter superfamily. ABCF family. YheS subfamily.

Functionally, genetic data indicate it may be involved in ribosome assembly or function. This is Probable ATP-binding protein YheS from Haemophilus influenzae (strain ATCC 51907 / DSM 11121 / KW20 / Rd).